Reading from the N-terminus, the 288-residue chain is DegV domain-containing protein SAS0714 (288 aa).

The DegV domain maps to 3–282 (IAVMTDSTSY…SGGLGLGYVG (280 aa)). Hexadecanoate-binding residues include Thr62 and Ser95.

Functionally, may bind long-chain fatty acids, such as palmitate, and may play a role in lipid transport or fatty acid metabolism. The chain is DegV domain-containing protein SAS0714 from Staphylococcus aureus (strain MSSA476).